The chain runs to 654 residues: Translation factor GUF1, mitochondrial (654 aa).

Residues 57-237 (ENYRNFSIVA…SVIKNIPSPV (181 aa)) form the tr-type G domain. GTP-binding positions include 66–73 (AHVDHGKS), 130–134 (DTPGH), and 184–187 (NKID).

This sequence belongs to the TRAFAC class translation factor GTPase superfamily. Classic translation factor GTPase family. LepA subfamily.

The protein resides in the mitochondrion inner membrane. It carries out the reaction GTP + H2O = GDP + phosphate + H(+). Promotes mitochondrial protein synthesis. May act as a fidelity factor of the translation reaction, by catalyzing a one-codon backward translocation of tRNAs on improperly translocated ribosomes. Binds to mitochondrial ribosomes in a GTP-dependent manner. This Candida dubliniensis (strain CD36 / ATCC MYA-646 / CBS 7987 / NCPF 3949 / NRRL Y-17841) (Yeast) protein is Translation factor GUF1, mitochondrial.